We begin with the raw amino-acid sequence, 773 residues long: Leucine-rich repeat and calponin homology domain-containing protein 2 (773 aa).

A disordered region spans residues 1–46; sequence MAASQGGGGNSGGGGCSGGGSGGGGGAAGGGGGGGGGGGGGAGAGG. LRR repeat units follow at residues 97-118, 120-141, 143-164, 166-187, 188-209, 211-232, 234-256, 257-277, and 279-300; these read NSGI…GYDL, DTTQ…VWLF, PLET…IKNL, MLTY…LFDL, PLKV…IGKL, DLME…MGKL, SLKE…GDLP, LVKL…YRKL, and HLQV…ICLK. 3 disordered regions span residues 324–409, 438–478, and 573–633; these read LDLP…QKDQ, FLKG…LKEV, and KYKS…SRQE. 2 stretches are compositionally biased toward basic and acidic residues: residues 386 to 396 and 440 to 466; these read SNREQTSRNDS and KGKE…KEQL. The span at 594–603 shows a compositional bias: polar residues; sequence AHMSAQSPVS. Residues 650-763 form the Calponin-homology (CH) domain; it reads LREEREQIRQ…VTVQALLELP (114 aa).

Functionally, may play a role in the organization of the cytoskeleton. The chain is Leucine-rich repeat and calponin homology domain-containing protein 2 (Lrch2) from Mus musculus (Mouse).